A 164-amino-acid polypeptide reads, in one-letter code: Protein-export protein SecB (164 aa).

The protein belongs to the SecB family. In terms of assembly, homotetramer, a dimer of dimers. One homotetramer interacts with 1 SecA dimer.

Its subcellular location is the cytoplasm. Its function is as follows. One of the proteins required for the normal export of preproteins out of the cell cytoplasm. It is a molecular chaperone that binds to a subset of precursor proteins, maintaining them in a translocation-competent state. It also specifically binds to its receptor SecA. The sequence is that of Protein-export protein SecB from Ruegeria sp. (strain TM1040) (Silicibacter sp.).